A 1234-amino-acid polypeptide reads, in one-letter code: uncharacterized protein (1234 aa).

This is an uncharacterized protein from Schizosaccharomyces pombe (strain 972 / ATCC 24843) (Fission yeast).